Reading from the N-terminus, the 132-residue chain is Fatty acid-binding protein 1 (132 aa).

A fatty acid is bound by residues R106 and 128 to 130 (RYY).

Belongs to the calycin superfamily. Fatty-acid binding protein (FABP) family. Monomer. In terms of tissue distribution, midgut.

It localises to the cytoplasm. Functionally, binds fatty acids in a 1:1 molar ratio. In Manduca sexta (Tobacco hawkmoth), this protein is Fatty acid-binding protein 1 (MFB1).